Here is a 260-residue protein sequence, read N- to C-terminus: Coiled-coil domain-containing protein 172 (260 aa).

The stretch at 13 to 194 (SEHQAEESRR…FEDKKHEAIC (182 aa)) forms a coiled coil.

Belongs to the CCDC172 family. In terms of assembly, may interact with TEKT2.

It localises to the cytoplasm. The protein localises to the cell projection. It is found in the cilium. The chain is Coiled-coil domain-containing protein 172 (CCDC172) from Bos taurus (Bovine).